Here is a 344-residue protein sequence, read N- to C-terminus: Dihydroorotase (344 aa).

Zn(2+) is bound by residues His-13 and His-15. Substrate is bound by residues 15 to 17 (HLR) and Asn-41. Zn(2+) contacts are provided by Lys-99, His-136, and His-174. Lys-99 is modified (N6-carboxylysine). Position 136 (His-136) interacts with substrate. Substrate is bound at residue Leu-219. Asp-247 lines the Zn(2+) pocket. Asp-247 is a catalytic residue. His-251 and Ala-263 together coordinate substrate.

Belongs to the metallo-dependent hydrolases superfamily. DHOase family. Class II DHOase subfamily. In terms of assembly, homodimer. The cofactor is Zn(2+).

It carries out the reaction (S)-dihydroorotate + H2O = N-carbamoyl-L-aspartate + H(+). It participates in pyrimidine metabolism; UMP biosynthesis via de novo pathway; (S)-dihydroorotate from bicarbonate: step 3/3. Catalyzes the reversible cyclization of carbamoyl aspartate to dihydroorotate. This chain is Dihydroorotase, found in Acinetobacter baumannii (strain SDF).